Here is a 504-residue protein sequence, read N- to C-terminus: Amidophosphoribosyltransferase (504 aa).

The Nucleophile role is filled by C2. The Glutamine amidotransferase type-2 domain maps to 2–235 (CGIVGIVSQS…PGEAIYVTFE (234 aa)). T305, D367, and D368 together coordinate Mg(2+).

This sequence in the C-terminal section; belongs to the purine/pyrimidine phosphoribosyltransferase family. Requires Mg(2+) as cofactor.

It catalyses the reaction 5-phospho-beta-D-ribosylamine + L-glutamate + diphosphate = 5-phospho-alpha-D-ribose 1-diphosphate + L-glutamine + H2O. The protein operates within purine metabolism; IMP biosynthesis via de novo pathway; N(1)-(5-phospho-D-ribosyl)glycinamide from 5-phospho-alpha-D-ribose 1-diphosphate: step 1/2. Catalyzes the formation of phosphoribosylamine from phosphoribosylpyrophosphate (PRPP) and glutamine. This Pasteurella multocida (strain Pm70) protein is Amidophosphoribosyltransferase.